A 775-amino-acid polypeptide reads, in one-letter code: DNA polymerase (775 aa).

The protein belongs to the DNA polymerase type-B family.

The enzyme catalyses DNA(n) + a 2'-deoxyribonucleoside 5'-triphosphate = DNA(n+1) + diphosphate. This chain is DNA polymerase (pol), found in Thermococcus sp. (strain 9oN-7).